Consider the following 426-residue polypeptide: 3',5'-cyclic-nucleotide phosphodiesterase (426 aa).

Positions Asp-210–Gly-229 are disordered.

It belongs to the cyclic nucleotide phosphodiesterase class-II family.

It catalyses the reaction a nucleoside 3',5'-cyclic phosphate + H2O = a nucleoside 5'-phosphate + H(+). This Candida albicans (Yeast) protein is 3',5'-cyclic-nucleotide phosphodiesterase (PDE1).